The chain runs to 297 residues: Probable endonuclease 4 (297 aa).

9 residues coordinate Zn(2+): His69, His110, Glu145, Asp179, His182, His214, Asp227, His229, and Glu259.

Belongs to the AP endonuclease 2 family. Zn(2+) is required as a cofactor.

The enzyme catalyses Endonucleolytic cleavage to 5'-phosphooligonucleotide end-products.. In terms of biological role, endonuclease IV plays a role in DNA repair. It cleaves phosphodiester bonds at apurinic or apyrimidinic (AP) sites, generating a 3'-hydroxyl group and a 5'-terminal sugar phosphate. The sequence is that of Probable endonuclease 4 from Listeria monocytogenes serotype 4b (strain CLIP80459).